The following is a 234-amino-acid chain: Adenosine 5'-phosphosulfate reductase (234 aa).

4 residues coordinate [4Fe-4S] cluster: C120, C121, C203, and C206. C229 functions as the Nucleophile; cysteine thiosulfonate intermediate in the catalytic mechanism.

Belongs to the PAPS reductase family. CysH subfamily. [4Fe-4S] cluster serves as cofactor.

Its subcellular location is the cytoplasm. It carries out the reaction [thioredoxin]-disulfide + sulfite + AMP + 2 H(+) = adenosine 5'-phosphosulfate + [thioredoxin]-dithiol. It functions in the pathway sulfur metabolism; hydrogen sulfide biosynthesis; sulfite from sulfate. Functionally, catalyzes the formation of sulfite from adenosine 5'-phosphosulfate (APS) using thioredoxin as an electron donor. In Bacillus cereus (strain B4264), this protein is Adenosine 5'-phosphosulfate reductase.